The following is a 516-amino-acid chain: Maturase K (516 aa).

Belongs to the intron maturase 2 family. MatK subfamily.

The protein localises to the plastid. It localises to the chloroplast. In terms of biological role, usually encoded in the trnK tRNA gene intron. Probably assists in splicing its own and other chloroplast group II introns. The polypeptide is Maturase K (Chara vulgaris (Common stonewort)).